The sequence spans 312 residues: Putative endo-1,4-beta-xylanase (312 aa).

One can recognise a GH10 domain in the interval 1-301; the sequence is MKQQYLLDYE…KPCFYSFLQA (301 aa). Glutamate 104 (proton donor) is an active-site residue. Catalysis depends on glutamate 216, which acts as the Nucleophile.

Belongs to the glycosyl hydrolase 10 (cellulase F) family.

It catalyses the reaction Endohydrolysis of (1-&gt;4)-beta-D-xylosidic linkages in xylans.. It participates in glycan degradation; xylan degradation. Functionally, could be a xylanase. The protein is Putative endo-1,4-beta-xylanase of Caldicellulosiruptor saccharolyticus (Caldocellum saccharolyticum).